A 208-amino-acid chain; its full sequence is MTNKDESVKKNTESTVEETNVKQNIDDSVEQAEESKGHLQDEAIEETSDENVIEEIDPKDQKINELQQLADENEEKYLRLYAEFENYKRRIQKENEINKTYQAQRVLTDILPAIDNIERALQIEGDDETFKSLQKGVQMVHESLINALKDNGLEVIKTEGEAFDPNIHQAVVQDDNPDFESGEITQELQKGYKLKDRVLRPSMVKVNQ.

Positions 1–12 (MTNKDESVKKNT) are enriched in basic and acidic residues. The tract at residues 1 to 51 (MTNKDESVKKNTESTVEETNVKQNIDDSVEQAEESKGHLQDEAIEETSDEN) is disordered. Over residues 13 to 23 (ESTVEETNVKQ) the composition is skewed to polar residues. A compositionally biased stretch (acidic residues) spans 42-51 (EAIEETSDEN).

Belongs to the GrpE family. In terms of assembly, homodimer.

It is found in the cytoplasm. Its function is as follows. Participates actively in the response to hyperosmotic and heat shock by preventing the aggregation of stress-denatured proteins, in association with DnaK and GrpE. It is the nucleotide exchange factor for DnaK and may function as a thermosensor. Unfolded proteins bind initially to DnaJ; upon interaction with the DnaJ-bound protein, DnaK hydrolyzes its bound ATP, resulting in the formation of a stable complex. GrpE releases ADP from DnaK; ATP binding to DnaK triggers the release of the substrate protein, thus completing the reaction cycle. Several rounds of ATP-dependent interactions between DnaJ, DnaK and GrpE are required for fully efficient folding. This Staphylococcus aureus (strain COL) protein is Protein GrpE.